The primary structure comprises 268 residues: Type III pantothenate kinase (268 aa).

6–13 (DVGNTNIV) contacts ATP. Substrate contacts are provided by residues Y100 and 107–110 (GADR). Residue D109 is the Proton acceptor of the active site. Residue D129 coordinates K(+). Residue T132 coordinates ATP. Substrate is bound at residue T184.

Belongs to the type III pantothenate kinase family. In terms of assembly, homodimer. NH4(+) is required as a cofactor. The cofactor is K(+).

The protein resides in the cytoplasm. It catalyses the reaction (R)-pantothenate + ATP = (R)-4'-phosphopantothenate + ADP + H(+). The protein operates within cofactor biosynthesis; coenzyme A biosynthesis; CoA from (R)-pantothenate: step 1/5. Catalyzes the phosphorylation of pantothenate (Pan), the first step in CoA biosynthesis. This chain is Type III pantothenate kinase, found in Alkaliphilus metalliredigens (strain QYMF).